A 162-amino-acid chain; its full sequence is Retinoic acid receptor responder protein 2 (162 aa).

The first 20 residues, 1 to 20 (MKCLLISLALWLGTVGTRGT), serve as a signal peptide directing secretion. Intrachain disulfides connect cysteine 79-cysteine 89, cysteine 100-cysteine 119, and cysteine 103-cysteine 134. The propeptide occupies 157–162 (RALRTK).

Post-translationally, secreted in an inactive precursor form, prochemerin, which is proteolytically processed by a variety of extracellular proteases to generate forms with differing levels of bioactivity. For example, the removal of six amino acids results in chemerin-156, which exhibits the highest activity, while removal of seven amino acids results in chemerin-155 which has slightly less activity. Some proteases are able to cleave at more than one site and chemerin forms may be sequentially processed by different enzymes to modulate activity levels. The coordinated expression and activity of chemerin-modifying enzymes is essential for regulating its bioactivation, inactivation and, consequently, biological function. Cathepsin G cleaves seven C-terminal amino acids from prochemerin (chemerin-155), elastase is able to cleave six (chemerin-156), eight (chemerin-154) or eleven (chemerin-151), plasmin cleaves five amino acids (chemerin-157), and tryptase cleaves five (chemerin-157) or eight (chemerin-154). Multiple cleavages might be required to fully activate chemerin, with an initial tryptase cleavage resulting in chemerin with low activity (chemerin-157), and a second cleavage by carboxypeptidase N or B producing highly active chemerin (chemerin-156). Expressed in the differentiated adipocytes (at protein level). Abundantly expressed in the liver, adipose tissue including visceral, epididymal, and brown adipose tissue.

Its subcellular location is the secreted. In terms of biological role, adipocyte-secreted protein (adipokine) that regulates adipogenesis, metabolism and inflammation through activation of the chemokine-like receptor 1 (CMKLR1). Also acts as a ligand for CMKLR2. Can also bind to C-C chemokine receptor-like 2 (CCRL2), but with a lower affinity than it does to CMKLR1 or CMKLR2. Positively regulates adipocyte differentiation, modulates the expression of adipocyte genes involved in lipid and glucose metabolism and might play a role in angiogenesis, a process essential for the expansion of white adipose tissue. Also acts as a pro-inflammatory adipokine, causing an increase in secretion of pro-inflammatory and prodiabetic adipokines, which further impair adipose tissue metabolic function and have negative systemic effects including impaired insulin sensitivity, altered glucose and lipid metabolism, and a decrease in vascular function in other tissues. Can have both pro- and anti-inflammatory properties depending on the modality of enzymatic cleavage by different classes of proteases. Acts as a chemotactic factor for leukocyte populations expressing CMKLR1, particularly immature plasmacytoid dendritic cells, but also immature myeloid DCs, macrophages and natural killer cells. Exerts an anti-inflammatory role by preventing TNF/TNFA-induced VCAM1 expression and monocytes adhesion in vascular endothelial cells. The effect is mediated via inhibiting activation of NF-kappa-B and CRK/p38 through stimulation of AKT1/NOS3 signaling and nitric oxide production. Exhibits an antimicrobial function in the skin. This is Retinoic acid receptor responder protein 2 (Rarres2) from Mus musculus (Mouse).